A 236-amino-acid polypeptide reads, in one-letter code: Small ribosomal subunit protein uS2c (236 aa).

Belongs to the universal ribosomal protein uS2 family.

The protein resides in the plastid. It is found in the chloroplast. This chain is Small ribosomal subunit protein uS2c (rps2), found in Piper cenocladum (Ant piper).